Reading from the N-terminus, the 25-residue chain is Gastrin-releasing peptide (25 aa).

Methionine amide is present on Met25.

The protein belongs to the bombesin/neuromedin-B/ranatensin family.

Its subcellular location is the secreted. It localises to the cytoplasmic vesicle. The protein resides in the secretory vesicle lumen. In terms of biological role, stimulates the release of gastrin and other gastrointestinal hormones. The polypeptide is Gastrin-releasing peptide (grp) (Scyliorhinus canicula (Small-spotted catshark)).